We begin with the raw amino-acid sequence, 430 residues long: RPM1 interacting protein 13 (430 aa).

Residues 1–21 (MGSGNHVDIVDVSSGEEDVDT) form a disordered region. Positions 231–300 (RHRIRQPIPH…QVSQSSHHSS (70 aa)) are nuclear localization.

As to quaternary structure, interacts with RPM1 (via its NB-ARC domain). Binds to ARF1 in the nucleus.

It localises to the nucleus. In terms of biological role, resistance protein interactor which positively enhances RPM1-mediated resistance to necrotrophic bacterial pathogens Pseudomonas syringae pv. tomato DC3000 harboring type III effector protein AvrRpm1 or AvrB, but prevents the hypersensitive response (HR) controlled by RPM1. Together with ARF1, promotes leaf senescence and cell death, probably by facilitating the translocation of ARF1 into the nucleus, and activates ROS-related enzymes (e.g. POD, CAT and SOD). This is RPM1 interacting protein 13 from Arabidopsis thaliana (Mouse-ear cress).